The sequence spans 193 residues: MNQSFSPEVPQSFFQRDALDVARALIGAEFRVGKAGGIIVETEAYHPDDPASHAFNGQTPRNRAMFGPAGHLYVYRSYGIHWCANFVCAPGSAVLLRAIEPLTGIDMMKLRRGTDKLKLLCSGPGKLCQAMAITGEMDGAPLNAPPFLLRLPKEAAAISTGRRIGISRAVDYPWRFGLEGSAFVSKKFEPDQR.

This sequence belongs to the DNA glycosylase MPG family.

The chain is Putative 3-methyladenine DNA glycosylase from Agrobacterium fabrum (strain C58 / ATCC 33970) (Agrobacterium tumefaciens (strain C58)).